A 248-amino-acid polypeptide reads, in one-letter code: Probable transcriptional regulatory protein HCH_04926 (248 aa).

This sequence belongs to the TACO1 family.

The protein localises to the cytoplasm. In Hahella chejuensis (strain KCTC 2396), this protein is Probable transcriptional regulatory protein HCH_04926.